A 198-amino-acid polypeptide reads, in one-letter code: Beta-crystallin A1 (198 aa).

The interval 1 to 13 is N-terminal arm; sequence MAQINPLPVPLGP. Beta/gamma crystallin 'Greek key' domains lie at 14–53 and 54–100; these read WKITVYDQENFQGKRMEFTSSCANIMECGFDNIRSLKVEC and GGWI…RPIC. The tract at residues 101-106 is connecting peptide; the sequence is SANHKE. 2 Beta/gamma crystallin 'Greek key' domains span residues 107–148 and 149–197; these read SKLV…KVQC and GSWV…RRIQ.

It belongs to the beta/gamma-crystallin family. As to quaternary structure, homo/heterodimer, or complexes of higher-order. The structure of beta-crystallin oligomers seems to be stabilized through interactions between the N-terminal arms.

Its function is as follows. Crystallins are the dominant structural components of the vertebrate eye lens. This is Beta-crystallin A1 from Rana temporaria (European common frog).